Reading from the N-terminus, the 131-residue chain is Small ribosomal subunit protein uS8 (131 aa).

This sequence belongs to the universal ribosomal protein uS8 family. Part of the 30S ribosomal subunit. Contacts proteins S5 and S12.

Functionally, one of the primary rRNA binding proteins, it binds directly to 16S rRNA central domain where it helps coordinate assembly of the platform of the 30S subunit. The chain is Small ribosomal subunit protein uS8 from Mycoplasmopsis agalactiae (strain NCTC 10123 / CIP 59.7 / PG2) (Mycoplasma agalactiae).